We begin with the raw amino-acid sequence, 406 residues long: Riboflavin biosynthesis protein RibBA (406 aa).

A DHBP synthase region spans residues 1 to 209 (MSEREEFKFN…IADLIKYRLR (209 aa)). Residues 33–34 (RE), Asp38, 148–152 (RAGHT), and Glu172 each bind D-ribulose 5-phosphate. Position 34 (Glu34) interacts with Mg(2+). His151 lines the Mg(2+) pocket. Residues 210-406 (RETLVEKVAS…VKKDKLGHMF (197 aa)) form a GTP cyclohydrolase II region. GTP is bound at residue 260-264 (RVHSE). Residues Cys265, Cys276, and Cys278 each contribute to the Zn(2+) site. GTP contacts are provided by residues Gln281, 304-306 (EGR), and Thr326. Residue Asp338 is the Proton acceptor; for GTP cyclohydrolase activity of the active site. Arg340 functions as the Nucleophile; for GTP cyclohydrolase activity in the catalytic mechanism. The GTP site is built by Thr361 and Lys366.

The protein in the N-terminal section; belongs to the DHBP synthase family. In the C-terminal section; belongs to the GTP cyclohydrolase II family. Mg(2+) is required as a cofactor. Mn(2+) serves as cofactor. Requires Zn(2+) as cofactor.

The catalysed reaction is D-ribulose 5-phosphate = (2S)-2-hydroxy-3-oxobutyl phosphate + formate + H(+). It catalyses the reaction GTP + 4 H2O = 2,5-diamino-6-hydroxy-4-(5-phosphoribosylamino)-pyrimidine + formate + 2 phosphate + 3 H(+). Its pathway is cofactor biosynthesis; riboflavin biosynthesis; 2-hydroxy-3-oxobutyl phosphate from D-ribulose 5-phosphate: step 1/1. The protein operates within cofactor biosynthesis; riboflavin biosynthesis; 5-amino-6-(D-ribitylamino)uracil from GTP: step 1/4. Functionally, catalyzes the conversion of D-ribulose 5-phosphate to formate and 3,4-dihydroxy-2-butanone 4-phosphate. In terms of biological role, catalyzes the conversion of GTP to 2,5-diamino-6-ribosylamino-4(3H)-pyrimidinone 5'-phosphate (DARP), formate and pyrophosphate. This Aquifex aeolicus (strain VF5) protein is Riboflavin biosynthesis protein RibBA.